Reading from the N-terminus, the 387-residue chain is Phosphoglycerate kinase (387 aa).

Substrate is bound by residues 21–23 (DLN), Arg-36, 59–62 (HLGR), Arg-113, and Arg-146. ATP is bound by residues Lys-197, Glu-314, and 340–343 (GGDT).

The protein belongs to the phosphoglycerate kinase family. Monomer.

Its subcellular location is the cytoplasm. It carries out the reaction (2R)-3-phosphoglycerate + ATP = (2R)-3-phospho-glyceroyl phosphate + ADP. It functions in the pathway carbohydrate degradation; glycolysis; pyruvate from D-glyceraldehyde 3-phosphate: step 2/5. The polypeptide is Phosphoglycerate kinase (Pseudomonas syringae pv. tomato (strain ATCC BAA-871 / DC3000)).